A 384-amino-acid polypeptide reads, in one-letter code: S-adenosylmethionine synthase (384 aa).

Residue His15 participates in ATP binding. A Mg(2+)-binding site is contributed by Asp17. K(+) is bound at residue Glu43. L-methionine contacts are provided by Glu56 and Gln99. The flexible loop stretch occupies residues 99 to 109 (QSPDINQGVDR). Residues 164 to 166 (DAK), 230 to 231 (RF), Asp239, 245 to 246 (RK), Ala262, and Lys266 each bind ATP. Position 239 (Asp239) interacts with L-methionine. Lys270 contacts L-methionine.

This sequence belongs to the AdoMet synthase family. As to quaternary structure, homotetramer; dimer of dimers. The cofactor is Mg(2+). K(+) serves as cofactor.

Its subcellular location is the cytoplasm. The enzyme catalyses L-methionine + ATP + H2O = S-adenosyl-L-methionine + phosphate + diphosphate. The protein operates within amino-acid biosynthesis; S-adenosyl-L-methionine biosynthesis; S-adenosyl-L-methionine from L-methionine: step 1/1. Catalyzes the formation of S-adenosylmethionine (AdoMet) from methionine and ATP. The overall synthetic reaction is composed of two sequential steps, AdoMet formation and the subsequent tripolyphosphate hydrolysis which occurs prior to release of AdoMet from the enzyme. The protein is S-adenosylmethionine synthase of Salmonella gallinarum (strain 287/91 / NCTC 13346).